The following is a 122-amino-acid chain: Large ribosomal subunit protein uL14 (122 aa).

It belongs to the universal ribosomal protein uL14 family. Part of the 50S ribosomal subunit. Forms a cluster with proteins L3 and L19. In the 70S ribosome, L14 and L19 interact and together make contacts with the 16S rRNA in bridges B5 and B8.

Functionally, binds to 23S rRNA. Forms part of two intersubunit bridges in the 70S ribosome. The protein is Large ribosomal subunit protein uL14 of Ruegeria pomeroyi (strain ATCC 700808 / DSM 15171 / DSS-3) (Silicibacter pomeroyi).